We begin with the raw amino-acid sequence, 169 residues long: Probable actin-related protein 2/3 complex subunit 4 (169 aa).

The protein belongs to the ARPC4 family. As to quaternary structure, component of the Arp2/3 complex, at least composed of arx-1, arx-2, arx-4 and arx-6.

The protein localises to the cytoplasm. The protein resides in the cytoskeleton. Functionally, functions as actin-binding component of the Arp2/3 complex which is involved in regulation of actin polymerization and together with an activating nucleation-promoting factor (NPF) mediates the formation of branched actin networks. Seems to contact the mother actin filament. Plays a role in time-dependent memory loss and the retention of conditioned behavior over time. The protein is Probable actin-related protein 2/3 complex subunit 4 of Caenorhabditis elegans.